The following is a 177-amino-acid chain: MSRVAKAPVVIPAGVEVKLNGQVISIKGKNGELTRTVHNAVEVKQEANALTFAPREGFANAWAQAGTTRALLNAMVVGVTEGFTKKLQLVGVGYRAAVKGNVVNLALGFSHPVDHQLPAGITAECPSQTEIVLKGADKQVIGQVAADLRAYRRPEPYKGKGVRYADEVVRTKEAKKK.

Belongs to the universal ribosomal protein uL6 family. As to quaternary structure, part of the 50S ribosomal subunit.

Functionally, this protein binds to the 23S rRNA, and is important in its secondary structure. It is located near the subunit interface in the base of the L7/L12 stalk, and near the tRNA binding site of the peptidyltransferase center. This chain is Large ribosomal subunit protein uL6, found in Serratia proteamaculans (strain 568).